The following is a 299-amino-acid chain: Pseudouridine-5'-phosphate glycosidase (299 aa).

The Proton donor role is filled by glutamate 23. Positions 84 and 104 each coordinate substrate. Aspartate 136 is a binding site for Mn(2+). 138 to 140 contacts substrate; it reads SAD. Lysine 157 (nucleophile) is an active-site residue.

Belongs to the pseudouridine-5'-phosphate glycosidase family. In terms of assembly, homotrimer. It depends on Mn(2+) as a cofactor.

The catalysed reaction is D-ribose 5-phosphate + uracil = psi-UMP + H2O. Its function is as follows. Catalyzes the reversible cleavage of pseudouridine 5'-phosphate (PsiMP) to ribose 5-phosphate and uracil. Functions biologically in the cleavage direction, as part of a pseudouridine degradation pathway. The chain is Pseudouridine-5'-phosphate glycosidase from Solibacter usitatus (strain Ellin6076).